A 91-amino-acid polypeptide reads, in one-letter code: DNA-directed RNA polymerase subunit omega (91 aa).

The protein belongs to the RNA polymerase subunit omega family. The RNAP catalytic core consists of 2 alpha, 1 beta, 1 beta' and 1 omega subunit. When a sigma factor is associated with the core the holoenzyme is formed, which can initiate transcription.

The catalysed reaction is RNA(n) + a ribonucleoside 5'-triphosphate = RNA(n+1) + diphosphate. Promotes RNA polymerase assembly. Latches the N- and C-terminal regions of the beta' subunit thereby facilitating its interaction with the beta and alpha subunits. This chain is DNA-directed RNA polymerase subunit omega, found in Nocardia farcinica (strain IFM 10152).